A 450-amino-acid chain; its full sequence is Exodeoxyribonuclease 7 large subunit (450 aa).

The protein belongs to the XseA family. Heterooligomer composed of large and small subunits.

It is found in the cytoplasm. The enzyme catalyses Exonucleolytic cleavage in either 5'- to 3'- or 3'- to 5'-direction to yield nucleoside 5'-phosphates.. Its function is as follows. Bidirectionally degrades single-stranded DNA into large acid-insoluble oligonucleotides, which are then degraded further into small acid-soluble oligonucleotides. The protein is Exodeoxyribonuclease 7 large subunit of Shewanella frigidimarina (strain NCIMB 400).